Reading from the N-terminus, the 777-residue chain is E3 UFM1-protein ligase 1 homolog (777 aa).

Residues M396–E417 are compositionally biased toward basic and acidic residues. The segment at M396–D470 is disordered.

It belongs to the UFL1 family.

Its function is as follows. E3 UFM1-protein ligase that mediates ufmylation of target proteins. This chain is E3 UFM1-protein ligase 1 homolog, found in Aedes aegypti (Yellowfever mosquito).